Reading from the N-terminus, the 274-residue chain is uncharacterized protein (274 aa).

The tract at residues 253–274 is disordered; it reads QTGDVRTTEGTALTDDTTKRNI.

This is an uncharacterized protein from Deinococcus radiodurans (strain ATCC 13939 / DSM 20539 / JCM 16871 / CCUG 27074 / LMG 4051 / NBRC 15346 / NCIMB 9279 / VKM B-1422 / R1).